The chain runs to 234 residues: Peroxisomal coenzyme A diphosphatase ndx-8 (234 aa).

One can recognise a Nudix hydrolase domain in the interval 27–162 (EQDAGVLILL…TFLIDEFYMV (136 aa)). The Nudix box signature appears at 66–90 (GGMMDDEDGQNVRRTAIREAYEEVG). Mg(2+) contacts are provided by Glu84 and Glu88. A helical membrane pass occupies residues 170–190 (YPTTYGVTALMCIVVAIGLLG). Residues 232–234 (SKI) carry the Microbody targeting signal motif.

The protein belongs to the Nudix hydrolase family. Mg(2+) serves as cofactor. Mn(2+) is required as a cofactor.

The protein localises to the peroxisome membrane. Its function is as follows. Coenzyme A diphosphatase which mediates the cleavage of CoA into 3',5'-ADP and 4'-phosphopantetheine. This Caenorhabditis elegans protein is Peroxisomal coenzyme A diphosphatase ndx-8 (ndx-8).